The chain runs to 86 residues: Toxin To8 (86 aa).

The N-terminal stretch at 1-20 (MTRFVLFISCFFLIGMVVEC) is a signal peptide. An LCN-type CS-alpha/beta domain is found at 21–83 (KEGYLLGSRG…LWESDTNECG (63 aa)). Intrachain disulfides connect Cys31–Cys82, Cys35–Cys57, Cys43–Cys63, and Cys47–Cys65. Cys82 is subject to Cysteine amide.

The protein belongs to the long (4 C-C) scorpion toxin superfamily. Sodium channel inhibitor family. Beta subfamily. In terms of tissue distribution, expressed by the venom gland.

It is found in the secreted. Its function is as follows. Beta toxins bind voltage-independently at site-4 of sodium channels (Nav) and shift the voltage of activation toward more negative potentials thereby affecting sodium channel activation and promoting spontaneous and repetitive firing. This chain is Toxin To8, found in Tityus obscurus (Amazonian scorpion).